The following is a 263-amino-acid chain: 3'-5' ssDNA/RNA exonuclease TatD (263 aa).

Positions 92, 128, and 153 each coordinate a divalent metal cation.

This sequence belongs to the metallo-dependent hydrolases superfamily. TatD-type hydrolase family. TatD subfamily. Monomer. Mg(2+) serves as cofactor.

The protein localises to the cytoplasm. Functionally, 3'-5' exonuclease that prefers single-stranded DNA and RNA. May play a role in the H(2)O(2)-induced DNA damage repair. The polypeptide is 3'-5' ssDNA/RNA exonuclease TatD (Rahnella sp. (strain Y9602)).